A 262-amino-acid chain; its full sequence is Intercellular adhesion molecule 4 (262 aa).

The first 22 residues, 1–22, serve as a signal peptide directing secretion; it reads MESALLLPSLLLVAAYPRGGSP. Residues 23-231 are Extracellular-facing; the sequence is QQEWMQSPPA…LTVLALSPAS (209 aa). 2 consecutive Ig-like C2-type domains span residues 54–116 and 138–209; these read GGSA…TREA and GHKY…LNLD. N-linked (GlcNAc...) asparagine glycans are attached at residues N60, N84, and N182. Intrachain disulfides connect C61/C105, C61/C109, C65/C109, and C145/C202. The chain crosses the membrane as a helical span at residues 232-252; it reads IALASTSIATLVGILLAVGAV. Over 253–262 the chain is Cytoplasmic; it reads YVRKYLAVQT.

This sequence belongs to the immunoglobulin superfamily. ICAM family.

It is found in the cell membrane. The protein resides in the secreted. Adhesion molecule that binds to leukocyte adhesion LFA-1 protein LFA-1 (integrin alpha-L/beta-2). ICAM4 is also a ligand for alpha-4/beta-1 and alpha-V integrins. Isoform 2 may modulate binding of membrane-associated ICAM4. This Mus musculus (Mouse) protein is Intercellular adhesion molecule 4 (Icam4).